Here is a 133-residue protein sequence, read N- to C-terminus: MSANDTISDMLTRIRNACAVRQTTTQIPTTRMTRSIAQVLKDEGFIADFEEVGEGIKSQLVLSLKYKGKNRQPIITTLTRVSKPGLRVYSNSKDLPRVLGGIGIAIVSTSKGIMTDREARKQNVGGEVLCYIW.

It belongs to the universal ribosomal protein uS8 family. As to quaternary structure, part of the 30S ribosomal subunit. Contacts proteins S5 and S12.

Functionally, one of the primary rRNA binding proteins, it binds directly to 16S rRNA central domain where it helps coordinate assembly of the platform of the 30S subunit. The sequence is that of Small ribosomal subunit protein uS8 from Microcystis aeruginosa (strain NIES-843 / IAM M-2473).